A 20-amino-acid polypeptide reads, in one-letter code: L-amino-acid oxidase L2 (20 aa).

It belongs to the flavin monoamine oxidase family. FIG1 subfamily. In terms of assembly, monomer. This is in contrast with most of its orthologs, that are non-covalently linked homodimers. The cofactor is FAD. Post-translationally, N-glycosylated. In terms of tissue distribution, expressed by the venom gland.

Its subcellular location is the secreted. It catalyses the reaction an L-alpha-amino acid + O2 + H2O = a 2-oxocarboxylate + H2O2 + NH4(+). The catalysed reaction is L-leucine + O2 + H2O = 4-methyl-2-oxopentanoate + H2O2 + NH4(+). It carries out the reaction L-phenylalanine + O2 + H2O = 3-phenylpyruvate + H2O2 + NH4(+). The enzyme catalyses L-tryptophan + O2 + H2O = indole-3-pyruvate + H2O2 + NH4(+). It catalyses the reaction L-methionine + O2 + H2O = 4-methylsulfanyl-2-oxobutanoate + H2O2 + NH4(+). The catalysed reaction is L-isoleucine + O2 + H2O = (S)-3-methyl-2-oxopentanoate + H2O2 + NH4(+). It carries out the reaction L-tyrosine + O2 + H2O = 3-(4-hydroxyphenyl)pyruvate + H2O2 + NH4(+). In terms of biological role, catalyzes an oxidative deamination of predominantly hydrophobic and aromatic L-amino acids, thus producing hydrogen peroxide that may contribute to the diverse toxic effects of this enzyme. Is active on L-Ile, L-Leu, L-Met, L-Phe, L-Trp, and L-Tyr. Exhibits diverse biological activities, such as hemorrhage, hemolysis, edema, apoptosis of vascular endothelial cells or tumor cell lines, antibacterial and antiparasitic activities, as well as regulation of platelet aggregation. Its effect on platelets is controversial, since it either induces aggregation or inhibits agonist-induced aggregation. These different effects are probably due to different experimental conditions. This is L-amino-acid oxidase L2 from Daboia russelii (Russel's viper).